We begin with the raw amino-acid sequence, 515 residues long: UBP3-associated protein BRE5 (515 aa).

An NTF2 domain is found at 8–140 (ICFAFLQNYY…FDITNDIIRF (133 aa)). Low complexity predominate over residues 157 to 166 (QSNEENSVSA). Disordered stretches follow at residues 157 to 410 (QSNE…PVFS) and 485 to 515 (KTVKKPTSNNPPGIFTNGTRSHRKQPLKRKD). A compositionally biased stretch (basic and acidic residues) spans 168-201 (EEDKIRHESGVEKEKEKEKSPEISKPKAKKETVK). Residue Ser187 is modified to Phosphoserine. A compositionally biased stretch (polar residues) spans 202–213 (DTTAPTESSTQE). 2 stretches are compositionally biased toward basic and acidic residues: residues 262–282 (LNEKSHKAEKKAAPIKTKEGS) and 299–319 (EVSDEKPVPGGVKEAETEIKP). Ser282 carries the post-translational modification Phosphoserine. Positions 330–341 (SGNNASTPSSSP) are enriched in polar residues. Thr336 carries the phosphothreonine modification. The residue at position 340 (Ser340) is a Phosphoserine. Residues 374–396 (IRPETLPKKPTERKFEMGNRRDN) are compositionally biased toward basic and acidic residues. Ser398 is subject to Phosphoserine. In terms of domain architecture, RRM spans 418–494 (YPIYIRGTNG…KTVKKPTSNN (77 aa)). Polar residues predominate over residues 489 to 503 (KPTSNNPPGIFTNGT). Basic residues predominate over residues 504-515 (RSHRKQPLKRKD).

In terms of assembly, heterotetramer with UBP3; contains two molecules of BRE5 and two molecules of UBP3. Forms a complex composed of CDC48, DOA1, deubiquitinase UBP3 and probably BRE5. Within the complex, interacts (via C-terminus) with CDC48; the interaction is direct and UBP3-independent.

Has a role in de-ubiquitination. In conjunction with UBP3, cleaves ubiquitin, leading to the subsequent mono-ubiquitination of sec23. This chain is UBP3-associated protein BRE5 (BRE5), found in Saccharomyces cerevisiae (strain ATCC 204508 / S288c) (Baker's yeast).